We begin with the raw amino-acid sequence, 130 residues long: UPF0225 protein DR_0483 (130 aa).

The protein belongs to the UPF0225 family.

The sequence is that of UPF0225 protein DR_0483 from Deinococcus radiodurans (strain ATCC 13939 / DSM 20539 / JCM 16871 / CCUG 27074 / LMG 4051 / NBRC 15346 / NCIMB 9279 / VKM B-1422 / R1).